The chain runs to 205 residues: Small ribosomal subunit protein uS4 (205 aa).

The disordered stretch occupies residues isoleucine 19 to leucine 45. The S4 RNA-binding domain occupies arginine 94–valine 157.

It belongs to the universal ribosomal protein uS4 family. Part of the 30S ribosomal subunit. Contacts protein S5. The interaction surface between S4 and S5 is involved in control of translational fidelity.

In terms of biological role, one of the primary rRNA binding proteins, it binds directly to 16S rRNA where it nucleates assembly of the body of the 30S subunit. Its function is as follows. With S5 and S12 plays an important role in translational accuracy. This Azorhizobium caulinodans (strain ATCC 43989 / DSM 5975 / JCM 20966 / LMG 6465 / NBRC 14845 / NCIMB 13405 / ORS 571) protein is Small ribosomal subunit protein uS4.